A 489-amino-acid chain; its full sequence is Rhamnulokinase (489 aa).

An ATP-binding site is contributed by 13 to 17 (ASSGR). An intrachain disulfide couples cysteine 68 to cysteine 222. Substrate-binding positions include glycine 83 and 236-238 (HDT). The Proton acceptor role is filled by aspartate 237. Threonine 259 contributes to the ATP binding site. Asparagine 296 serves as a coordination point for substrate. Glutamine 304 is an ATP binding site. A disulfide bridge links cysteine 353 with cysteine 370. Glycine 402 lines the ATP pocket. Cysteine 413 and cysteine 417 are oxidised to a cystine.

This sequence belongs to the rhamnulokinase family. Mg(2+) serves as cofactor.

The catalysed reaction is L-rhamnulose + ATP = L-rhamnulose 1-phosphate + ADP + H(+). The protein operates within carbohydrate degradation; L-rhamnose degradation; glycerone phosphate from L-rhamnose: step 2/3. Its function is as follows. Involved in the catabolism of L-rhamnose (6-deoxy-L-mannose). Catalyzes the transfer of the gamma-phosphate group from ATP to the 1-hydroxyl group of L-rhamnulose to yield L-rhamnulose 1-phosphate. The chain is Rhamnulokinase from Shigella sonnei (strain Ss046).